We begin with the raw amino-acid sequence, 161 residues long: Nucleotide-binding protein XAC3671 (161 aa).

It belongs to the YajQ family.

Its function is as follows. Nucleotide-binding protein. This is Nucleotide-binding protein XAC3671 from Xanthomonas axonopodis pv. citri (strain 306).